The following is a 62-amino-acid chain: Photosystem II reaction center protein Z (62 aa).

2 consecutive transmembrane segments (helical) span residues 8-28 (ALFA…VVLA) and 41-61 (FSGI…NSFV).

It belongs to the PsbZ family. In terms of assembly, PSII is composed of 1 copy each of membrane proteins PsbA, PsbB, PsbC, PsbD, PsbE, PsbF, PsbH, PsbI, PsbJ, PsbK, PsbL, PsbM, PsbT, PsbY, PsbZ, Psb30/Ycf12, at least 3 peripheral proteins of the oxygen-evolving complex and a large number of cofactors. It forms dimeric complexes.

It localises to the plastid. The protein resides in the chloroplast thylakoid membrane. Its function is as follows. May control the interaction of photosystem II (PSII) cores with the light-harvesting antenna, regulates electron flow through the 2 photosystem reaction centers. PSII is a light-driven water plastoquinone oxidoreductase, using light energy to abstract electrons from H(2)O, generating a proton gradient subsequently used for ATP formation. The chain is Photosystem II reaction center protein Z from Chlorella vulgaris (Green alga).